Here is a 936-residue protein sequence, read N- to C-terminus: Lipoxygenase 2.1, chloroplastic (936 aa).

The interval 1-69 is disordered; it reads MLTATKPLVG…LSADSNGAAV (69 aa). Positions 47 to 59 are enriched in low complexity; that stretch reads STSTSTTTTTTTT. The PLAT domain occupies 88 to 217; the sequence is MKATVTVHMS…CTPDKRVFFP (130 aa). A Lipoxygenase domain is found at 220–936; sequence SYLPSQTPKG…EMGIPNSISI (717 aa). The tract at residues 264 to 308 is disordered; it reads LGNPDDDNNPTTRPVLGGKEHPYPRRCRTGRPRSKKDPFSEERSH. Basic residues predominate over residues 287–297; the sequence is PRRCRTGRPRS. Over residues 298 to 308 the composition is skewed to basic and acidic residues; the sequence is KKDPFSEERSH. The Fe cation site is built by His587, His592, His777, Asn781, and Ile936.

It belongs to the lipoxygenase family. Requires Fe cation as cofactor. Post-translationally, the N-terminus is blocked.

The protein resides in the plastid. It is found in the chloroplast. The catalysed reaction is (9Z,12Z)-octadecadienoate + O2 = (13S)-hydroperoxy-(9Z,11E)-octadecadienoate. The enzyme catalyses (9Z,12Z,15Z)-octadecatrienoate + O2 = (13S)-hydroperoxy-(9Z,11E,15Z)-octadecatrienoate. It functions in the pathway lipid metabolism; oxylipin biosynthesis. Functionally, plant lipoxygenase may be involved in a number of diverse aspects of plant physiology including growth and development, pest resistance, and senescence or responses to wounding. This enzyme is possibly involved in jasmonic acid synthesis. It exhibits linoleate 13-lipoxygenase and arachidonate 15-lipoxygenase activity. This Hordeum vulgare (Barley) protein is Lipoxygenase 2.1, chloroplastic (LOX2.1).